The following is a 368-amino-acid chain: MSYKNRLTACFDDILKVSAEMMMQQQLKNVQLDPYMVNGFSAQQQNTLKEKIHMFHGILDDLENMLSKSTYYVDTLANLGKESKRQKELELEKQREQEEEEKKQKLLELERKKKEQEEEEEKKKKQKEEEEKRKKELEEQERKKKEQEEEEKRRRQQEQDGDKQQSMFDGLDFTNADLDTSQPGTSGQNDIKSPTMGAGPQTAGTDKPNTADGPDKTNPPIAAFGLGDSQSGGLYNDLNTMDLSMFSELDGGGFDASGFDTANTSNANATTNSVPNNNNPATNDSNMNNDPTAAINAFDGTAAGNNETLGQGEKLEFDQSNPSAMLGNDINMGDNGEDYLTLNDFNDLNIDWSAAGEGGDLDLNGFNI.

Positions 112–163 (KKKEQEEEEEKKKKQKEEEEKRKKELEEQERKKKEQEEEEKRRRQQEQDGDK) are enriched in basic and acidic residues. Disordered regions lie at residues 112 to 231 (KKKE…DSQS) and 265 to 308 (SNAN…NNET). The span at 177 to 192 (DLDTSQPGTSGQNDIK) shows a compositional bias: polar residues. A compositionally biased stretch (low complexity) spans 265–290 (SNANATTNSVPNNNNPATNDSNMNND).

It belongs to the Mediator complex subunit 2 family. Component of the Mediator complex.

It localises to the nucleus. Functionally, component of the Mediator complex, a coactivator involved in the regulated transcription of nearly all RNA polymerase II-dependent genes. Mediator functions as a bridge to convey information from gene-specific regulatory proteins to the basal RNA polymerase II transcription machinery. Mediator is recruited to promoters by direct interactions with regulatory proteins and serves as a scaffold for the assembly of a functional preinitiation complex with RNA polymerase II and the general transcription factors. The polypeptide is Mediator of RNA polymerase II transcription subunit 2 (MED2) (Candida glabrata (strain ATCC 2001 / BCRC 20586 / JCM 3761 / NBRC 0622 / NRRL Y-65 / CBS 138) (Yeast)).